The primary structure comprises 238 residues: Probable solute-binding protein AdeT2 (238 aa).

Belongs to the bacterial solute-binding protein 7 family.

Functionally, mediates antimicrobial resistance via active efflux. Contributes to resistance to antibiotics such as chloramphenicol, erythromycin and novobiocin. May be part of a tripartite ATP-independent periplasmic (TRAP) transport system. The protein is Probable solute-binding protein AdeT2 of Acinetobacter baumannii.